The chain runs to 1067 residues: MSRPNTRNKNKRQRPDAVDSSSQILRKIHEANDVTDDDINQLFMIWKPVCQGCRVNTRDNPNCFCGLVPPLNGSRKSGLWQKTSEIIQSLGPDPTLDRRDSESTPAGLTNLGATCYANSILQCLYMNTAFREGVFSVEVHVLKQNPVLDQIARLFAQLHASQKSFVDSDAFVKTLELDNGVQQDTHEFLTLLLSLLERCLLHSGVKAKTIVQDLFSGSVSHVTTCSKCGRDSEASSKMEDFYALELNVKGLKSLDASLNDYLSLEQLNGDNQYFCGSCNARVDATRCIKLRTLPPVITFQLKRCIFLPKTTAKKKITSSFSFPQVLDMGSRLAESSQNKLTYDLSAVLIHKGSAVNSGHYVAHIKDEKTGLWWEFDDEHVSELGKRPCNEASSSTPQSESNGTASSGNITDGIQSGSSDCRSAIKSEVFSSSDAYMLMYSLRCDKQENQEGQKENPIDITKGEVKQLKGGYLPKHLSEWINNMNAVFLESCKQYNLRKEKELNALTERRQEVRTILSEAAVQSLEEQYFWISTDWLRLWADTTLPPALDNTPLLCSHGKVHASKVNCMKRISELAWIKLESKFNGGPKLGKGDYCRDCLMDGARMVVSSDSYRDRRTFMKSIANDVLSGKCEDGMYYISRAWLQQWIKRKNLDAPTEADAGPTNAITCNHGELMPEQAPGAKRVVVPENFWSFLFEDALKVMSEDTLDCTCFPVDSSQCCHCTEVLSEVACFEDSLRTLKVKQRQNHEKLATGKGIPLTPQSRYFLLPSPWLVQWRIYINMTGKNSSSAPEPERLDGVINTLKCKKHTRLLERLPELVCRRGSYFQKNPSTDKLTIIPELDWKYFCDEWGGLMENGISAFIEVGNTDQSSSPDVIDLEKDSSPDDNMDVDAQQLILRASPEICEECIGERESCELMQKLSYSEGDVFVCFVRGKEAPKAMLEASDSSFEVDRRTSKRSRRTNYGNLTSLKVSATTTVYQLKMMIWELLGVMKENQELHKGSKVIDQESATLADMNIFPGDRLWVRDTEMHEHRDIADELCEKKPGAQDIEEGFRGTLLTGNISSEAC.

The span at 1–12 (MSRPNTRNKNKR) shows a compositional bias: basic residues. The tract at residues 1 to 22 (MSRPNTRNKNKRQRPDAVDSSS) is disordered. The USP domain occupies 106–442 (AGLTNLGATC…DAYMLMYSLR (337 aa)). Cysteine 115 (nucleophile) is an active-site residue. The active-site Proton acceptor is histidine 359. The interval 385–418 (KRPCNEASSSTPQSESNGTASSGNITDGIQSGSS) is disordered. Polar residues predominate over residues 390–418 (EASSSTPQSESNGTASSGNITDGIQSGSS). 3 consecutive DUSP domains span residues 503–595 (NALT…GDYC), 610–711 (DSYR…DCTC), and 738–861 (TLKV…SAFI). Residues 948–1031 (FEVDRRTSKR…LWVRDTEMHE (84 aa)) form the Ubiquitin-like domain.

Belongs to the peptidase C19 family. Expressed in seedlings, roots, stems, leaves and inflorescences.

The protein resides in the nucleus. It catalyses the reaction Thiol-dependent hydrolysis of ester, thioester, amide, peptide and isopeptide bonds formed by the C-terminal Gly of ubiquitin (a 76-residue protein attached to proteins as an intracellular targeting signal).. Functionally, recognizes and hydrolyzes the peptide bond at the C-terminal Gly of ubiquitin. Involved in the processing of poly-ubiquitin precursors as well as that of ubiquitinated proteins. Deubiquitinates H2BK143ub1 of histone H2B. This chain is Ubiquitin carboxyl-terminal hydrolase 26 (UBP26), found in Arabidopsis thaliana (Mouse-ear cress).